The sequence spans 192 residues: ADP-ribosylation factor-like protein 4C (192 aa).

The N-myristoyl glycine moiety is linked to residue Gly2. GTP-binding positions include Gly20 to Thr27, Asp68 to Gln72, and Asn127 to Asp130.

It belongs to the small GTPase superfamily. Arf family. In terms of assembly, interacts with CYTH2. Interacts with alpha tubulin; interaction is independent on the ARL4C GTP or GDP binding status. In terms of tissue distribution, expressed in several tumor cell lines (at protein level). Expressed in lung, brain, leukocytes and placenta.

The protein resides in the cell projection. It is found in the filopodium. It localises to the cell membrane. The protein localises to the cytoplasm. In terms of biological role, small GTP-binding protein which cycles between an inactive GDP-bound and an active GTP-bound form, and the rate of cycling is regulated by guanine nucleotide exchange factors (GEF) and GTPase-activating proteins (GAP). GTP-binding protein that does not act as an allosteric activator of the cholera toxin catalytic subunit. May be involved in transport between a perinuclear compartment and the plasma membrane, apparently linked to the ABCA1-mediated cholesterol secretion pathway. Recruits CYTH1, CYTH2, CYTH3 and CYTH4 to the plasma membrane in the GDP-bound form. Regulates the microtubule-dependent intracellular vesicular transport from early endosome to recycling endosome process. The polypeptide is ADP-ribosylation factor-like protein 4C (ARL4C) (Homo sapiens (Human)).